We begin with the raw amino-acid sequence, 126 residues long: Aspartate 1-decarboxylase (126 aa).

Residue Ser-25 is the Schiff-base intermediate with substrate; via pyruvic acid of the active site. At Ser-25 the chain carries Pyruvic acid (Ser). Thr-57 is a binding site for substrate. Tyr-58 acts as the Proton donor in catalysis. 73 to 75 (GGA) is a binding site for substrate.

Belongs to the PanD family. In terms of assembly, heterooctamer of four alpha and four beta subunits. Requires pyruvate as cofactor. Is synthesized initially as an inactive proenzyme, which is activated by self-cleavage at a specific serine bond to produce a beta-subunit with a hydroxyl group at its C-terminus and an alpha-subunit with a pyruvoyl group at its N-terminus.

The protein localises to the cytoplasm. The enzyme catalyses L-aspartate + H(+) = beta-alanine + CO2. It participates in cofactor biosynthesis; (R)-pantothenate biosynthesis; beta-alanine from L-aspartate: step 1/1. Its function is as follows. Catalyzes the pyruvoyl-dependent decarboxylation of aspartate to produce beta-alanine. The polypeptide is Aspartate 1-decarboxylase (Acinetobacter baumannii (strain AB307-0294)).